We begin with the raw amino-acid sequence, 170 residues long: Ribosome maturation factor RimM (170 aa).

In terms of domain architecture, PRC barrel spans 98 to 170 (PDEYYWVDLE…LIVVDWDPDF (73 aa)).

Belongs to the RimM family. In terms of assembly, binds ribosomal protein uS19.

The protein resides in the cytoplasm. Functionally, an accessory protein needed during the final step in the assembly of 30S ribosomal subunit, possibly for assembly of the head region. Essential for efficient processing of 16S rRNA. May be needed both before and after RbfA during the maturation of 16S rRNA. It has affinity for free ribosomal 30S subunits but not for 70S ribosomes. This Xanthomonas oryzae pv. oryzae (strain MAFF 311018) protein is Ribosome maturation factor RimM.